The primary structure comprises 135 residues: Large ribosomal subunit protein eL27y (135 aa).

It belongs to the eukaryotic ribosomal protein eL27 family.

The protein is Large ribosomal subunit protein eL27y (RPL27B) of Arabidopsis thaliana (Mouse-ear cress).